The following is a 460-amino-acid chain: Protein king tubby (460 aa).

2 disordered regions span residues 75 to 97 (NGSP…NNMR) and 115 to 208 (HELE…EGDV). Residues 85-97 (AMNTSRNHSNNMR) show a composition bias toward polar residues. Residues 130-145 (QHQQSASHSANSTQSQ) are compositionally biased toward low complexity. Ser-153 carries the post-translational modification Phosphoserine. A compositionally biased stretch (gly residues) spans 194-203 (NGTGNGTGGE).

It belongs to the TUB family. In terms of tissue distribution, detected in sensory neurons which have a ciliary structure such as the chordotonal neurons, Orco-expressing olfactory receptor neurons, labellar gustatory receptor neurons and in the femoral chordotonal organ (at protein level). In the chordotonal neurons of the Johnston's organ expressed in the proximal to distal cilia, with lower levels of expression in the distal portion (at protein level). Also detected in the salivary glands and antenna (at protein level). Expressed in photoreceptor cells (at protein level). At stage 9 expression is detected in a subset of neuroblasts. By stage 12 expression is found in both the CNS and PNS. In late-stage embryos, expression persists in the CNS and PNS with more abundant expression in the antennal-maxillary sensory neurons and in bilateral groups of cells in the brain.

The protein localises to the cytoplasm. It localises to the nucleus. The protein resides in the cell projection. Its subcellular location is the cilium membrane. It is found in the rhabdomere. Functionally, functions in regulating protein trafficking, retinal maintenance and lipid storage. Protects photoreceptor cells R1 to R6 against light-induced retinal degeneration by stimulating norpA-mediated endocytosis of the rhodopsin ninaE (Rh1). In the auditory receptor neurons, functions as a cilia trafficking regulator of various transient receptor potential (TRP) channel components including iav and nompC. Likely to deliver pre-ciliary vesicles containing membrane proteins such as iav and nompC to the intraflagellar transport complex (IFT) at the cilia base. Plays a role in the inhibition of fat storage. This Drosophila melanogaster (Fruit fly) protein is Protein king tubby (ktub).